The primary structure comprises 240 residues: Ribonuclease HII (240 aa).

One can recognise an RNase H type-2 domain in the interval 33-222 (GPVAGVDEVG…VRRIVTRSNT (190 aa)). Positions 39, 40, and 131 each coordinate a divalent metal cation.

The protein belongs to the RNase HII family. Requires Mn(2+) as cofactor. Mg(2+) is required as a cofactor.

The protein localises to the cytoplasm. It catalyses the reaction Endonucleolytic cleavage to 5'-phosphomonoester.. In terms of biological role, endonuclease that specifically degrades the RNA of RNA-DNA hybrids. This is Ribonuclease HII from Mycobacterium leprae (strain Br4923).